The chain runs to 424 residues: CinA-like protein (424 aa).

It belongs to the CinA family.

In Prochlorococcus marinus (strain MIT 9301), this protein is CinA-like protein.